Consider the following 51-residue polypeptide: Large ribosomal subunit protein bL33 (51 aa).

It belongs to the bacterial ribosomal protein bL33 family.

The chain is Large ribosomal subunit protein bL33 from Colwellia psychrerythraea (strain 34H / ATCC BAA-681) (Vibrio psychroerythus).